A 279-amino-acid chain; its full sequence is Putative pyruvate, phosphate dikinase regulatory protein (279 aa).

156–163 lines the ADP pocket; sequence GVSRTSKT.

This sequence belongs to the pyruvate, phosphate/water dikinase regulatory protein family. PDRP subfamily.

It carries out the reaction N(tele)-phospho-L-histidyl/L-threonyl-[pyruvate, phosphate dikinase] + ADP = N(tele)-phospho-L-histidyl/O-phospho-L-threonyl-[pyruvate, phosphate dikinase] + AMP + H(+). It catalyses the reaction N(tele)-phospho-L-histidyl/O-phospho-L-threonyl-[pyruvate, phosphate dikinase] + phosphate + H(+) = N(tele)-phospho-L-histidyl/L-threonyl-[pyruvate, phosphate dikinase] + diphosphate. Functionally, bifunctional serine/threonine kinase and phosphorylase involved in the regulation of the pyruvate, phosphate dikinase (PPDK) by catalyzing its phosphorylation/dephosphorylation. The chain is Putative pyruvate, phosphate dikinase regulatory protein from Maricaulis maris (strain MCS10) (Caulobacter maris).